The primary structure comprises 549 residues: Hydroxylamine reductase (549 aa).

The [4Fe-4S] cluster site is built by cysteine 3, cysteine 6, cysteine 15, and cysteine 21. Hybrid [4Fe-2O-2S] cluster contacts are provided by histidine 244, glutamate 268, cysteine 313, cysteine 405, cysteine 433, cysteine 458, glutamate 492, and lysine 494. Cysteine 405 carries the cysteine persulfide modification.

Belongs to the HCP family. It depends on [4Fe-4S] cluster as a cofactor. The cofactor is hybrid [4Fe-2O-2S] cluster.

It is found in the cytoplasm. It catalyses the reaction A + NH4(+) + H2O = hydroxylamine + AH2 + H(+). Catalyzes the reduction of hydroxylamine to form NH(3) and H(2)O. The polypeptide is Hydroxylamine reductase (Crocosphaera subtropica (strain ATCC 51142 / BH68) (Cyanothece sp. (strain ATCC 51142))).